We begin with the raw amino-acid sequence, 273 residues long: Glutamate racemase (273 aa).

Substrate-binding positions include 11 to 12 and 43 to 44; these read DS and YG. The Proton donor/acceptor role is filled by C74. 75–76 provides a ligand contact to substrate; that stretch reads NT. C185 serves as the catalytic Proton donor/acceptor. 186-187 serves as a coordination point for substrate; that stretch reads TH.

This sequence belongs to the aspartate/glutamate racemases family. In terms of assembly, homodimer.

The catalysed reaction is L-glutamate = D-glutamate. The protein operates within cell wall biogenesis; peptidoglycan biosynthesis. Its function is as follows. Provides the (R)-glutamate required for cell wall biosynthesis. This chain is Glutamate racemase, found in Enterococcus faecalis (strain ATCC 700802 / V583).